The chain runs to 493 residues: F(420)H(2) dehydrogenase subunit N (493 aa).

A run of 14 helical transmembrane segments spans residues 7–27 (LAPELVLVATGLVILLTGVFL), 34–54 (ILGYLATLGTLAAIFLTVKSF), 78–98 (LSQFFKLVFLAVALIVSIASI), 107–127 (TEEFYTLVLFATFGMMIVASA), 130–150 (LILLFCAFELASLATFALAGF), 165–185 (FVIGSVSAALMLFGLSFVYGA), 205–225 (PIGIVAIVLLTAGFGFKMALV), 244–264 (ALLAAGSKKMGFVAAFRVFII), 273–293 (WQFMFTLLAVVTMTFGNVVAV), 310–330 (AGYIAMAFAVMTPVALAGGIM), 333–353 (LAHAFMKAGAFIAAAAVVWMI), 381–401 (ALCMTVFVFALAGIPPTAGFM), 404–424 (FVLFSSTIQAGMTWLAVIAIL), and 454–474 (IPFPYAAALLVAVAGVLVMGL).

Belongs to the complex I subunit 2 family. In terms of assembly, the FPO complex is composed of at least 13 different subunits. FpoA, FpoH, FpoJ, FpoK, FpoL, FpoM and FpoN proteins constitute the membrane sector of the complex.

Its subcellular location is the cell membrane. It catalyses the reaction methanophenazine + reduced coenzyme F420-(gamma-L-Glu)(n) = dihydromethanophenazine + oxidized coenzyme F420-(gamma-L-Glu)(n) + H(+). Its function is as follows. Component of the F(420)H(2) dehydrogenase (FPO complex) which is part of the energy-conserving F(420)H(2):heterodisulfide oxidoreductase system. The membrane-bound electron transfer system of the complex plays an important role in the metabolism of methylotrophic methanogens when the organisms grow on methanol or methylamines. Catalyzes the oxidation of methanophenazine to dihydromethanophenazine. It shuttles electrons from F(420)H(2), via FAD and iron-sulfur (Fe-S) centers, to methanophenazine (an electron carrier in the membrane). It couples the redox reaction to proton translocation (for every two electrons transferred, two hydrogen ions are translocated across the cytoplasmic membrane), and thus conserves the redox energy in a proton gradient. It also catalyzes the oxidation of F(420)H(2) with quinones such as 2,3-dimethyl-1,4-naphthoquinone, 2-methyl-1,4-naphthoquinone and tetramethyl-p-benzoquinone. In Methanosarcina mazei (strain ATCC BAA-159 / DSM 3647 / Goe1 / Go1 / JCM 11833 / OCM 88) (Methanosarcina frisia), this protein is F(420)H(2) dehydrogenase subunit N (fpoN).